A 300-amino-acid chain; its full sequence is Ribosomal protein bS6--L-glutamate ligase (300 aa).

The ATP-grasp domain occupies 104-287 (MQLLARQGID…IAGKMIRWIE (184 aa)). ATP is bound by residues K141, 178–179 (EY), D187, and 211–213 (RSN). The Mg(2+) site is built by D248, E260, and N262. Residues D248, E260, and N262 each contribute to the Mn(2+) site.

The protein belongs to the RimK family. Mg(2+) is required as a cofactor. Requires Mn(2+) as cofactor.

An L-glutamate ligase that catalyzes the ATP-dependent post-translational addition of glutamate residues to the C-terminus of ribosomal protein bS6 (RpsF). Is also able to catalyze the synthesis of poly-alpha-glutamate in vitro, via ATP hydrolysis from unprotected glutamate as substrate. The number of glutamate residues added to either RpsF or to poly-alpha-glutamate changes with pH. The sequence is that of Ribosomal protein bS6--L-glutamate ligase from Escherichia coli O7:K1 (strain IAI39 / ExPEC).